A 209-amino-acid chain; its full sequence is MTGRFIVLEGIDGCGKTTQIQHLLEWLPNSGLMPKGAAVVCTREPGGTPLGRSIRELLLHTSDQEAPAPTAELMLYAADRAQHVETLIRPALERGDWVISDRFSGSTLAYQGYGRGLDRDLIQRLEQIATAGLQPDITLWLRLSVQESLQRRLGDKEDRIEAEGAAFLERVAQGFAQLAEHRSWCAVAADQSASAVRAALERQLQEHLA.

Position 10 to 17 (10 to 17) interacts with ATP; the sequence is GIDGCGKT.

This sequence belongs to the thymidylate kinase family.

The enzyme catalyses dTMP + ATP = dTDP + ADP. In terms of biological role, phosphorylation of dTMP to form dTDP in both de novo and salvage pathways of dTTP synthesis. In Synechococcus sp. (strain CC9605), this protein is Thymidylate kinase.